We begin with the raw amino-acid sequence, 169 residues long: Phosphopantetheine adenylyltransferase (169 aa).

Serine 10 is a substrate binding site. ATP contacts are provided by residues 10–11 (SF) and histidine 18. Substrate is bound by residues lysine 42, threonine 79, and arginine 93. ATP is bound by residues 94–96 (GLR), glutamate 104, and 129–135 (VRPITAT).

The protein belongs to the bacterial CoaD family. Homohexamer. Mg(2+) is required as a cofactor.

It localises to the cytoplasm. It catalyses the reaction (R)-4'-phosphopantetheine + ATP + H(+) = 3'-dephospho-CoA + diphosphate. The protein operates within cofactor biosynthesis; coenzyme A biosynthesis; CoA from (R)-pantothenate: step 4/5. Its function is as follows. Reversibly transfers an adenylyl group from ATP to 4'-phosphopantetheine, yielding dephospho-CoA (dPCoA) and pyrophosphate. The chain is Phosphopantetheine adenylyltransferase from Rhodopseudomonas palustris (strain TIE-1).